Here is a 225-residue protein sequence, read N- to C-terminus: UPF0758 protein BB3258 (225 aa).

The 123-residue stretch at 103 to 225 (ALANPDLVRR…TVSMAAQGHL (123 aa)) folds into the MPN domain. Zn(2+) contacts are provided by histidine 174, histidine 176, and aspartate 187. Residues 174–187 (HNHPGGTAAASAAD) carry the JAMM motif motif.

This sequence belongs to the UPF0758 family.

The sequence is that of UPF0758 protein BB3258 from Bordetella bronchiseptica (strain ATCC BAA-588 / NCTC 13252 / RB50) (Alcaligenes bronchisepticus).